The following is a 263-amino-acid chain: Acyl-[acyl-carrier-protein]--UDP-N-acetylglucosamine O-acyltransferase (263 aa).

The protein belongs to the transferase hexapeptide repeat family. LpxA subfamily. In terms of assembly, homotrimer.

The protein resides in the cytoplasm. It carries out the reaction a (3R)-hydroxyacyl-[ACP] + UDP-N-acetyl-alpha-D-glucosamine = a UDP-3-O-[(3R)-3-hydroxyacyl]-N-acetyl-alpha-D-glucosamine + holo-[ACP]. It functions in the pathway glycolipid biosynthesis; lipid IV(A) biosynthesis; lipid IV(A) from (3R)-3-hydroxytetradecanoyl-[acyl-carrier-protein] and UDP-N-acetyl-alpha-D-glucosamine: step 1/6. In terms of biological role, involved in the biosynthesis of lipid A, a phosphorylated glycolipid that anchors the lipopolysaccharide to the outer membrane of the cell. The chain is Acyl-[acyl-carrier-protein]--UDP-N-acetylglucosamine O-acyltransferase from Stenotrophomonas maltophilia (strain R551-3).